Reading from the N-terminus, the 499-residue chain is Lysine--tRNA ligase (499 aa).

The Mg(2+) site is built by glutamate 403 and glutamate 410.

Belongs to the class-II aminoacyl-tRNA synthetase family. Homodimer. It depends on Mg(2+) as a cofactor.

It is found in the cytoplasm. It catalyses the reaction tRNA(Lys) + L-lysine + ATP = L-lysyl-tRNA(Lys) + AMP + diphosphate. The chain is Lysine--tRNA ligase from Campylobacter hominis (strain ATCC BAA-381 / DSM 21671 / CCUG 45161 / LMG 19568 / NCTC 13146 / CH001A).